A 338-amino-acid chain; its full sequence is Aspartate carbamoyltransferase catalytic subunit (338 aa).

The carbamoyl phosphate site is built by Arg-59 and Thr-60. Lys-87 provides a ligand contact to L-aspartate. Carbamoyl phosphate-binding residues include Arg-109, His-142, and Gln-145. Arg-182 and Arg-253 together coordinate L-aspartate. Residues Gly-294 and Pro-295 each coordinate carbamoyl phosphate.

Belongs to the aspartate/ornithine carbamoyltransferase superfamily. ATCase family. As to quaternary structure, heterododecamer (2C3:3R2) of six catalytic PyrB chains organized as two trimers (C3), and six regulatory PyrI chains organized as three dimers (R2).

It catalyses the reaction carbamoyl phosphate + L-aspartate = N-carbamoyl-L-aspartate + phosphate + H(+). The protein operates within pyrimidine metabolism; UMP biosynthesis via de novo pathway; (S)-dihydroorotate from bicarbonate: step 2/3. Its function is as follows. Catalyzes the condensation of carbamoyl phosphate and aspartate to form carbamoyl aspartate and inorganic phosphate, the committed step in the de novo pyrimidine nucleotide biosynthesis pathway. The protein is Aspartate carbamoyltransferase catalytic subunit of Prochlorococcus marinus (strain AS9601).